A 360-amino-acid chain; its full sequence is MLLYRKYFIKNILPLLIIVTFSVTSIVWITQILKLLYLFDKGIKVIDFFNLVVLVLPTLLFILLPIITVIAVLYIYNNLKVERQLIILQTSGVNNIQLALPALYVALTIMLLAYYISSTILPLSHINLKSRLNFIKNNYISSMIEEKTFNKITKNITVFIDKKLTGNIMNGIIIFDNRNADNPSVVFAGSGTLNIYGNNPIFELNKGLRQEYDANGNLTQLTFDSLMIKLQNNSSLTSQRTQNNKEANEYYISELLTPSHDLVITKKIKLIAEAHQRIIWPLYNFVLPCLALAVFLRYPYSKKTTFMPVLFSALTVLFVTAIHFILQNFASKNLDFIFACYFNLLVALTIGLYLLVHKRI.

Transmembrane regions (helical) follow at residues 12 to 32, 52 to 72, 96 to 116, 278 to 298, 306 to 326, and 336 to 356; these read ILPLLIIVTFSVTSIVWITQI, VVLVLPTLLFILLPIITVIAV, IQLALPALYVALTIMLLAYYI, IIWPLYNFVLPCLALAVFLRY, FMPVLFSALTVLFVTAIHFIL, and FIFACYFNLLVALTIGLYLLV.

The protein localises to the cell membrane. This is an uncharacterized protein from Rickettsia prowazekii (strain Madrid E).